The following is a 103-amino-acid chain: Small ribosomal subunit protein uS10 (103 aa).

This sequence belongs to the universal ribosomal protein uS10 family. As to quaternary structure, part of the 30S ribosomal subunit.

In terms of biological role, involved in the binding of tRNA to the ribosomes. This is Small ribosomal subunit protein uS10 from Hydrogenovibrio crunogenus (strain DSM 25203 / XCL-2) (Thiomicrospira crunogena).